We begin with the raw amino-acid sequence, 441 residues long: D-inositol 3-phosphate glycosyltransferase (441 aa).

His38 provides a ligand contact to 1D-myo-inositol 3-phosphate. Residues Gln44–Pro45 and Gly52 each bind UDP-N-acetyl-alpha-D-glucosamine. 1D-myo-inositol 3-phosphate contacts are provided by residues Asp49 to Asn54, Lys107, Tyr140, Thr164, and Arg184. Residues Arg258, Lys263, and Gln316 each contribute to the UDP-N-acetyl-alpha-D-glucosamine site. Residues Phe325, Gln326, and Ala328 each coordinate Mg(2+). Residues Glu338 and Glu346 each coordinate UDP-N-acetyl-alpha-D-glucosamine. Thr352 contacts Mg(2+).

It belongs to the glycosyltransferase group 1 family. MshA subfamily. Homodimer.

It carries out the reaction 1D-myo-inositol 3-phosphate + UDP-N-acetyl-alpha-D-glucosamine = 1D-myo-inositol 2-acetamido-2-deoxy-alpha-D-glucopyranoside 3-phosphate + UDP + H(+). Catalyzes the transfer of a N-acetyl-glucosamine moiety to 1D-myo-inositol 3-phosphate to produce 1D-myo-inositol 2-acetamido-2-deoxy-glucopyranoside 3-phosphate in the mycothiol biosynthesis pathway. The polypeptide is D-inositol 3-phosphate glycosyltransferase (Mycolicibacterium paratuberculosis (strain ATCC BAA-968 / K-10) (Mycobacterium paratuberculosis)).